A 358-amino-acid chain; its full sequence is DNA replication and repair protein RecF (358 aa).

Glycine 30–threonine 37 serves as a coordination point for ATP.

This sequence belongs to the RecF family.

Its subcellular location is the cytoplasm. In terms of biological role, the RecF protein is involved in DNA metabolism; it is required for DNA replication and normal SOS inducibility. RecF binds preferentially to single-stranded, linear DNA. It also seems to bind ATP. This chain is DNA replication and repair protein RecF, found in Acinetobacter baylyi (strain ATCC 33305 / BD413 / ADP1).